The following is a 409-amino-acid chain: Failed axon connections homolog (409 aa).

The chain crosses the membrane as a helical span at residues 68-88 (YLTGGALLAAAAYLLHELLVI). The interval 372-409 (DEGAENSFSRTPDTDFTGHSLFDSDVDMDDYTEHEQCK) is disordered.

This sequence belongs to the FAX family.

The protein resides in the membrane. In terms of biological role, may play a role in axonal development. This is Failed axon connections homolog (Faxc) from Rattus norvegicus (Rat).